Here is a 100-residue protein sequence, read N- to C-terminus: Urease subunit gamma (100 aa).

The protein belongs to the urease gamma subunit family. Heterotrimer of UreA (gamma), UreB (beta) and UreC (alpha) subunits. Three heterotrimers associate to form the active enzyme.

It localises to the cytoplasm. The enzyme catalyses urea + 2 H2O + H(+) = hydrogencarbonate + 2 NH4(+). The protein operates within nitrogen metabolism; urea degradation; CO(2) and NH(3) from urea (urease route): step 1/1. The protein is Urease subunit gamma of Pseudomonas fluorescens (strain ATCC BAA-477 / NRRL B-23932 / Pf-5).